The following is a 237-amino-acid chain: Large ribosomal subunit protein uL1 (237 aa).

The protein belongs to the universal ribosomal protein uL1 family. As to quaternary structure, part of the 50S ribosomal subunit.

Binds directly to 23S rRNA. The L1 stalk is quite mobile in the ribosome, and is involved in E site tRNA release. In terms of biological role, protein L1 is also a translational repressor protein, it controls the translation of the L11 operon by binding to its mRNA. The polypeptide is Large ribosomal subunit protein uL1 (Rickettsia typhi (strain ATCC VR-144 / Wilmington)).